The primary structure comprises 114 residues: Iron-sulfur cluster insertion protein ErpA (114 aa).

Iron-sulfur cluster-binding residues include C42, C106, and C108.

The protein belongs to the HesB/IscA family. As to quaternary structure, homodimer. Iron-sulfur cluster is required as a cofactor.

Its function is as follows. Required for insertion of 4Fe-4S clusters for at least IspG. The polypeptide is Iron-sulfur cluster insertion protein ErpA (Salmonella typhi).